The following is a 506-amino-acid chain: Cobyric acid synthase (506 aa).

Residues 251-448 (DIDIAVVQVP…LHGLFDSDAF (198 aa)) form the GATase cobBQ-type domain. Cysteine 332 serves as the catalytic Nucleophile. Histidine 440 is an active-site residue.

It belongs to the CobB/CobQ family. CobQ subfamily.

Its pathway is cofactor biosynthesis; adenosylcobalamin biosynthesis. Its function is as follows. Catalyzes amidations at positions B, D, E, and G on adenosylcobyrinic A,C-diamide. NH(2) groups are provided by glutamine, and one molecule of ATP is hydrogenolyzed for each amidation. The chain is Cobyric acid synthase from Citrobacter koseri (strain ATCC BAA-895 / CDC 4225-83 / SGSC4696).